A 411-amino-acid chain; its full sequence is D-galactonate dehydratase family member SBI_01856 (411 aa).

Residues asparagine 45 and histidine 130 each contribute to the substrate site. The active-site Proton donor/acceptor is the tyrosine 167. Residue aspartate 219 participates in Mg(2+) binding. The active-site Proton donor/acceptor is histidine 221. 2 residues coordinate Mg(2+): glutamate 245 and glutamate 271. Substrate is bound by residues glutamate 271, arginine 292, histidine 321, aspartate 325, and glutamate 348.

Belongs to the mandelate racemase/muconate lactonizing enzyme family. GalD subfamily. Requires Mg(2+) as cofactor.

The enzyme catalyses D-gluconate = 2-dehydro-3-deoxy-D-gluconate + H2O. Functionally, has low D-gluconate dehydratase activity (in vitro), suggesting that it has no significant role in D-gluconate degradation in vivo. Has no detectable activity with a panel of 70 other acid sugars (in vitro). The polypeptide is D-galactonate dehydratase family member SBI_01856 (Streptomyces bingchenggensis (strain BCW-1)).